The following is a 1872-amino-acid chain: MFSRRSHGDVKKSTQKVLDPKKDVLTRLKHLRALLDNVDASDLKQFFETNYSQIYFIFYENFITLENSLKLKGNNKSQREELDSILFLFEKILQFLPERIFFRWHYQSIGSTLKKLLHTGNSIKIRCEGIRLFLLWLQALQTNCAEEQVLIFACLVPGFPAVLSSRGPCTLETLINPSPSIVDAKIYPEEITPLLPAISGEKIAEDQTCFFLQILLKYMVIQAASLEWKNKENQDTGFKFLFTLFRKYYLPHLFPSFTKLTNIYKPVLEIPHLRPKPVYVTVTRDNETIYSTKIPYMAARVVFIKWIVTFFLEKKYLTATQNTKNGVDVLPKIIQTVGGGAIQEKVPELDGAGSTEQDKSHSNSSTLSDRRLSNSSLCSIEEEHRTVYEMVQRILLSTRGYVNFVNEVFRQAFLLPSCEISVTRKVVQVYRKWILQNKPVFMEEPDKKDVAQEDADKLGLSETDSKEASSESSGHKRSSSWGRTYSFTSAMSRGCVTEEDNTNVKAGAQAMLQVFLTNAANVFLLEPCAEVPMLLREQVDASKAVLIIFRRMIMELTMNQKTWEQMLQILLRITEAVMQKPKDKHVKDLFAQSLAGLLFRTLIVAWIRANLCVYISRELWDDFLRVLSSLTEWEELITEWSNIMDSLTAVLARTVYGVEMTNLPLDKLSEQKEKKQRGKGCILEPQKGTAVGRSFSLSWRSHPDVTEPMRFRSATTSGAPGVEKARNTVRQKATEVEEFQQAESTAAADCDYLVVGQQQVPRSSSTSDITERLYSDSSQGQKVEHSQNLSSSEPKSVQESKGHVTHEHEGITMLVRRSSSPAELELKDDLQQAHGRCRQRQTSESTGSDTVVGYSNEAELPVSPWQACEEDPDLSTPTDAVADSDARHWLQLSPTDASNLTDSRECLADDCSIIAGGNLTGWHPDSAAVLWRRVLGILGDVNNIQSPKIHAKVFGYLYELWYKLAKIRDNLAISLDNQSSPSPPLLIPPLRMFASWLFKATTLPNEYKEGKLQAYKLICAMMTRRQDVLPNSDFLVHFYLVMHLGLTSEDQDVLNTIIKNCSPRFFSLGLPGFSMLVGDFITAAARVLSTDMLAAPRSEALTLLGSLVCFPNTYQEIPLLQSVPEVSDVVTGAEDVKHYLINILLKNATEEPNECARCIAICSLGVWICEELAQSASHPQVKDAINVIGVTLKFPNKIVAQVACDVLQLLVSYWEKLQMFETALPRKMAEILVATIAFLLPSAEYSSVETDKKFIVSLLLCLLDWCMALPVSALLHPVSTAVLEELHPSRAPLLDYIYRVLHCCVCGSSTYTQQSHYTLTLADLSSTDYDPFLPLANVRNSEPIQYHSSADLGNLLTVEEEKKRRSVELIPLTARMVMAHLVNHLGHYPLSGGPAVLHSLVSENHDNAHVEGTELSSEVFRSPNLQLFVFNDSTLISYLQTPAEGPAGGTSGGSLSDVRVIVRDISGKYSWDGKVLYGPLEGRLAPNGRNPSFQISGWHHHTCGPQKDLFNGEEGDDVLDKLLENIGHTSPECLLPSQLNLNEPSPTPCAMNWDQEKAIMEVILRQSAQEDEYVQRCNSDSSVTVTSQGQPSPVEPRGPFYFCRLLLDDLGMNSWDRRKNFHLLKKNSKLLRELKNLDSRQCRETHKIAVFYIAEGQEDKCSILANERGSQAYEDFVAGLGWEVDLSTHCGFMGGLQRNGSTGQTAPYYATSTVEVIFHVSTRMPSDSDDSLTKKLRHLGNDEVHIVWSEHSRDYRRGIIPTAFGDVSIIIYPMKNHMFFITITKKPEVPFFGPLFDGAIVSGKLLPSLICATCINASRAVKCLIPLYQSFYEERALYLEAIIQNHREVMTFEDFAAQVFSPSPSYSVSGTD.

The segment at 350 to 370 (DGAGSTEQDKSHSNSSTLSDR) is disordered. Phosphoserine is present on residues serine 373, serine 376, and serine 379. Residues 445–469 (PDKKDVAQEDADKLGLSETDSKEAS) are compositionally biased toward basic and acidic residues. The segment at 445–481 (PDKKDVAQEDADKLGLSETDSKEASSESSGHKRSSSW) is disordered. Serine 486 is modified (phosphoserine). Serine 696 carries the post-translational modification Phosphoserine; by PKB. Disordered regions lie at residues 711-730 (FRSATTSGAPGVEKARNTVR) and 758-813 (QQVP…GITM). Threonine 715 carries the phosphothreonine; by PKB modification. Polar residues-rich tracts occupy residues 758-768 (QQVPRSSSTSD) and 775-795 (SDSSQGQKVEHSQNLSSSEPK). Over residues 796 to 810 (SVQESKGHVTHEHEG) the composition is skewed to basic and acidic residues. A phosphoserine mark is found at serine 819 and serine 820. Residues 831-851 (QQAHGRCRQRQTSESTGSDTV) are disordered. Residues 840–849 (RQTSESTGSD) show a composition bias toward polar residues. At serine 1592 the chain carries Phosphoserine. The region spanning 1634–1842 (LKNLDSRQCR…EERALYLEAI (209 aa)) is the Rap-GAP domain.

Component of the heterodimeric RalGAP2 complex with RALGAPB. Heterodimerization is required for activity. As to expression, abundantly expressed in testis, pancreas, lung, thymus, brown fat, and white fat.

The protein localises to the cytoplasm. Its function is as follows. Catalytic subunit of the heterodimeric RalGAP2 complex which acts as a GTPase activator for the Ras-like small GTPases RALA and RALB. The protein is Ral GTPase-activating protein subunit alpha-2 (Ralgapa2) of Mus musculus (Mouse).